Here is a 133-residue protein sequence, read N- to C-terminus: Nickel-responsive regulator (133 aa).

4 residues coordinate Ni(2+): His76, His87, His89, and Cys95.

Belongs to the transcriptional regulatory CopG/NikR family. As to quaternary structure, homotetramer. It depends on Ni(2+) as a cofactor.

Its function is as follows. Transcriptional repressor of the nikABCDE operon. Is active in the presence of excessive concentrations of intracellular nickel. This chain is Nickel-responsive regulator, found in Enterobacter sp. (strain 638).